A 103-amino-acid chain; its full sequence is N(4)-acetylcytidine amidohydrolase (103 aa).

Positions 6-101 (ITFFQRFQDD…QTQFYVIEFK (96 aa)) constitute an ASCH domain. Residue Lys21 is the Proton acceptor of the active site. The active-site Nucleophile is the Thr24. Residue Glu74 is the Proton donor of the active site.

This sequence belongs to the N(4)-acetylcytidine amidohydrolase family.

The enzyme catalyses N(4)-acetylcytidine + H2O = cytidine + acetate + H(+). It catalyses the reaction N(4)-acetyl-2'-deoxycytidine + H2O = 2'-deoxycytidine + acetate + H(+). The catalysed reaction is N(4)-acetylcytosine + H2O = cytosine + acetate + H(+). Catalyzes the hydrolysis of N(4)-acetylcytidine (ac4C). The protein is N(4)-acetylcytidine amidohydrolase (yqfB) of Escherichia coli O8 (strain IAI1).